The sequence spans 827 residues: Periplasmic nitrate reductase (827 aa).

A signal peptide (tat-type signal) is located at residues 1–32 (MELNRRDFMKANAAAAAALAAGITLPVKNVYA). Residues 37–93 (IKWDKAPCRFCGTGCSVLVGTQNGRMVASQGDPDAEVNRGLNCIKGYFLPKIIYGKD) enclose the 4Fe-4S Mo/W bis-MGD-type domain. Positions 44, 47, 51, and 79 each coordinate [4Fe-4S] cluster. Residues Lys81, Gln148, Asn173, Cys177, 210–217 (WGSNMAEM), 241–245 (STFEH), Met371, Gln375, Asn481, 507–508 (SD), Lys530, Asp557, and 717–726 (TGRVLEHWHS) each bind Mo-bis(molybdopterin guanine dinucleotide). Residue Phe793 participates in substrate binding. The Mo-bis(molybdopterin guanine dinucleotide) site is built by Asn801 and Lys818.

It belongs to the prokaryotic molybdopterin-containing oxidoreductase family. NasA/NapA/NarB subfamily. In terms of assembly, component of the periplasmic nitrate reductase NapAB complex composed of NapA and NapB. [4Fe-4S] cluster is required as a cofactor. Requires Mo-bis(molybdopterin guanine dinucleotide) as cofactor. In terms of processing, predicted to be exported by the Tat system. The position of the signal peptide cleavage has not been experimentally proven.

It is found in the periplasm. It carries out the reaction 2 Fe(II)-[cytochrome] + nitrate + 2 H(+) = 2 Fe(III)-[cytochrome] + nitrite + H2O. Functionally, catalytic subunit of the periplasmic nitrate reductase complex NapAB. Receives electrons from NapB and catalyzes the reduction of nitrate to nitrite. The polypeptide is Periplasmic nitrate reductase (Glaesserella parasuis serovar 5 (strain SH0165) (Haemophilus parasuis)).